Consider the following 341-residue polypeptide: Type II methyltransferase M.NgoPII (341 aa).

The SAM-dependent MTase C5-type domain occupies 12 to 341 (MKIISLFSGC…AAAIKKTLER (330 aa)). The active site involves Cys-84.

It belongs to the class I-like SAM-binding methyltransferase superfamily. C5-methyltransferase family.

It catalyses the reaction a 2'-deoxycytidine in DNA + S-adenosyl-L-methionine = a 5-methyl-2'-deoxycytidine in DNA + S-adenosyl-L-homocysteine + H(+). In terms of biological role, a methylase that recognizes the double-stranded sequence 5'-GGCC-3', methylates C-3 on both strands, and protects the DNA from cleavage by the NgoPII endonuclease. This Neisseria gonorrhoeae protein is Type II methyltransferase M.NgoPII (ngoPIIM).